We begin with the raw amino-acid sequence, 102 residues long: Putative ubiquitin-like protein FUBI-like protein ENSP00000310146 (102 aa).

A Ubiquitin-like domain is found at 23 to 99; the sequence is LCPQVAYVRA…LEVVGRRLGV (77 aa).

This chain is Putative ubiquitin-like protein FUBI-like protein ENSP00000310146, found in Homo sapiens (Human).